We begin with the raw amino-acid sequence, 281 residues long: Glyoxalase 1 (281 aa).

VOC domains are found at residues 4 to 127 and 132 to 251; these read RALH…IGKA and KVLR…FVGD.

The protein belongs to the glyoxalase I family. As to expression, expressed in the following tissues in both larvae and adults: pharynx, pharyngeal-intestinal valve, intestine, anal sphincter, vulval muscle, seam cells and the nervous system.

In terms of biological role, thought to act as a glyoxalase. May remove methylglyoxal from mitochondrial proteins. Has roles in reducing oxidative stress and increasing lifespan. The sequence is that of Glyoxalase 1 (glod-4) from Caenorhabditis elegans.